Reading from the N-terminus, the 477-residue chain is Aspartyl/glutamyl-tRNA(Asn/Gln) amidotransferase subunit B (477 aa).

This sequence belongs to the GatB/GatE family. GatB subfamily. In terms of assembly, heterotrimer of A, B and C subunits.

It carries out the reaction L-glutamyl-tRNA(Gln) + L-glutamine + ATP + H2O = L-glutaminyl-tRNA(Gln) + L-glutamate + ADP + phosphate + H(+). The catalysed reaction is L-aspartyl-tRNA(Asn) + L-glutamine + ATP + H2O = L-asparaginyl-tRNA(Asn) + L-glutamate + ADP + phosphate + 2 H(+). In terms of biological role, allows the formation of correctly charged Asn-tRNA(Asn) or Gln-tRNA(Gln) through the transamidation of misacylated Asp-tRNA(Asn) or Glu-tRNA(Gln) in organisms which lack either or both of asparaginyl-tRNA or glutaminyl-tRNA synthetases. The reaction takes place in the presence of glutamine and ATP through an activated phospho-Asp-tRNA(Asn) or phospho-Glu-tRNA(Gln). The polypeptide is Aspartyl/glutamyl-tRNA(Asn/Gln) amidotransferase subunit B (Lactococcus lactis subsp. cremoris (strain SK11)).